The chain runs to 341 residues: Lipoyl synthase (341 aa).

7 residues coordinate [4Fe-4S] cluster: cysteine 85, cysteine 90, cysteine 96, cysteine 111, cysteine 115, cysteine 118, and serine 325. Residues 97-314 (FSGGTATFMI…AEEGYKMGFK (218 aa)) form the Radical SAM core domain.

Belongs to the radical SAM superfamily. Lipoyl synthase family. Requires [4Fe-4S] cluster as cofactor.

Its subcellular location is the cytoplasm. It catalyses the reaction [[Fe-S] cluster scaffold protein carrying a second [4Fe-4S](2+) cluster] + N(6)-octanoyl-L-lysyl-[protein] + 2 oxidized [2Fe-2S]-[ferredoxin] + 2 S-adenosyl-L-methionine + 4 H(+) = [[Fe-S] cluster scaffold protein] + N(6)-[(R)-dihydrolipoyl]-L-lysyl-[protein] + 4 Fe(3+) + 2 hydrogen sulfide + 2 5'-deoxyadenosine + 2 L-methionine + 2 reduced [2Fe-2S]-[ferredoxin]. The protein operates within protein modification; protein lipoylation via endogenous pathway; protein N(6)-(lipoyl)lysine from octanoyl-[acyl-carrier-protein]: step 2/2. Catalyzes the radical-mediated insertion of two sulfur atoms into the C-6 and C-8 positions of the octanoyl moiety bound to the lipoyl domains of lipoate-dependent enzymes, thereby converting the octanoylated domains into lipoylated derivatives. The protein is Lipoyl synthase of Pseudomonas fluorescens (strain SBW25).